The sequence spans 140 residues: MKIKRSEILEQITWQDMMQLLLPEEQIPLMEKDIAKFMSYNHKVPQSVLTAVLMKAIITAKRTHGANTLINEAYLNITFKSFVMDKKKERIIIRTASQAAAKLDKEISDLKQNKIVKPVVTNPDWVDEVMNELVEAFEAQ.

This is an uncharacterized protein from Acholeplasma phage L2 (Bacteriophage L2).